Here is a 156-residue protein sequence, read N- to C-terminus: Arginine repressor (156 aa).

This sequence belongs to the ArgR family.

The protein localises to the cytoplasm. It participates in amino-acid biosynthesis; L-arginine biosynthesis [regulation]. Its function is as follows. Regulates arginine biosynthesis genes. In Salmonella paratyphi C (strain RKS4594), this protein is Arginine repressor.